The primary structure comprises 72 residues: MAKDDVIEVEGTVAETLPNAMFKVELENGHTVLAHVSGKIRMHFIRILPGDKVTVELSPYDLTRGRITYRYK.

Residues 1-72 (MAKDDVIEVE…TRGRITYRYK (72 aa)) form the S1-like domain. At Tyr60 the chain carries Phosphotyrosine.

This sequence belongs to the IF-1 family. As to quaternary structure, component of the 30S ribosomal translation pre-initiation complex which assembles on the 30S ribosome in the order IF-2 and IF-3, IF-1 and N-formylmethionyl-tRNA(fMet); mRNA recruitment can occur at any time during PIC assembly.

Its subcellular location is the cytoplasm. One of the essential components for the initiation of protein synthesis. Stabilizes the binding of IF-2 and IF-3 on the 30S subunit to which N-formylmethionyl-tRNA(fMet) subsequently binds. Helps modulate mRNA selection, yielding the 30S pre-initiation complex (PIC). Upon addition of the 50S ribosomal subunit IF-1, IF-2 and IF-3 are released leaving the mature 70S translation initiation complex. The protein is Translation initiation factor IF-1 of Bacillus pumilus (strain SAFR-032).